We begin with the raw amino-acid sequence, 124 residues long: Small ribosomal subunit protein bS6 (124 aa).

Positions 99 to 124 (PLPAPRIVPGSEPEPVQQQEAAAVEA) are disordered. A compositionally biased stretch (low complexity) spans 111-124 (PEPVQQQEAAAVEA).

It belongs to the bacterial ribosomal protein bS6 family.

Binds together with bS18 to 16S ribosomal RNA. This chain is Small ribosomal subunit protein bS6, found in Prochlorococcus marinus (strain MIT 9313).